Reading from the N-terminus, the 38-residue chain is Photosystem II reaction center protein L (38 aa).

The chain crosses the membrane as a helical span at residues 17-37; sequence SLYWGLLLIFVLAVLFSSYIF.

This sequence belongs to the PsbL family. PSII is composed of 1 copy each of membrane proteins PsbA, PsbB, PsbC, PsbD, PsbE, PsbF, PsbH, PsbI, PsbJ, PsbK, PsbL, PsbM, PsbT, PsbY, PsbZ, Psb30/Ycf12, at least 3 peripheral proteins of the oxygen-evolving complex and a large number of cofactors. It forms dimeric complexes.

It is found in the plastid. It localises to the chloroplast thylakoid membrane. In terms of biological role, one of the components of the core complex of photosystem II (PSII). PSII is a light-driven water:plastoquinone oxidoreductase that uses light energy to abstract electrons from H(2)O, generating O(2) and a proton gradient subsequently used for ATP formation. It consists of a core antenna complex that captures photons, and an electron transfer chain that converts photonic excitation into a charge separation. This subunit is found at the monomer-monomer interface and is required for correct PSII assembly and/or dimerization. In Euglena gracilis, this protein is Photosystem II reaction center protein L.